We begin with the raw amino-acid sequence, 478 residues long: Chromosomal replication initiator protein DnaA (478 aa).

The tract at residues 1-90 (MSVELWQQCV…KRSSAPRAVQ (90 aa)) is domain I, interacts with DnaA modulators. Residues 91-141 (PASPPPAVVQAAPVAIEEASAARTVDAQPVAPATVRTERSVQVEGGLKHTS) form a domain II region. The domain III, AAA+ region stretch occupies residues 142-358 (YLNRAFTFEN…GALKRVIAHS (217 aa)). Residues glycine 186, glycine 188, lysine 189, and threonine 190 each coordinate ATP. The domain IV, binds dsDNA stretch occupies residues 359–478 (HFTNHPITIE…YKNLLRTLTT (120 aa)).

This sequence belongs to the DnaA family. Oligomerizes as a right-handed, spiral filament on DNA at oriC.

The protein resides in the cytoplasm. Functionally, plays an essential role in the initiation and regulation of chromosomal replication. ATP-DnaA binds to the origin of replication (oriC) to initiate formation of the DNA replication initiation complex once per cell cycle. Binds the DnaA box (a 9 base pair repeat at the origin) and separates the double-stranded (ds)DNA. Forms a right-handed helical filament on oriC DNA; dsDNA binds to the exterior of the filament while single-stranded (ss)DNA is stabiized in the filament's interior. The ATP-DnaA-oriC complex binds and stabilizes one strand of the AT-rich DNA unwinding element (DUE), permitting loading of DNA polymerase. After initiation quickly degrades to an ADP-DnaA complex that is not apt for DNA replication. Binds acidic phospholipids. This Azotobacter vinelandii (strain DJ / ATCC BAA-1303) protein is Chromosomal replication initiator protein DnaA.